The primary structure comprises 124 residues: Photoactive yellow protein (124 aa).

In terms of domain architecture, PAS spans 22 to 85 (AEYLPFGAVL…GEFLRFHQTG (64 aa)). Cysteine 68 bears the S-(4-hydroxycinnamyl)cysteine mark.

It belongs to the photoactive yellow protein family. Post-translationally, the 4-hydroxycinnamic acid (p-coumaric acid) chromophore is covalently bound via a thioester linkage.

Functionally, this photoactive protein is a photoreceptor with kinetics similar to that of rhodopsin. This chain is Photoactive yellow protein (pyp), found in Cereibacter sphaeroides (strain ATCC 17023 / DSM 158 / JCM 6121 / CCUG 31486 / LMG 2827 / NBRC 12203 / NCIMB 8253 / ATH 2.4.1.) (Rhodobacter sphaeroides).